The following is a 65-amino-acid chain: SCOCO-like protein 1 (65 aa).

Residues 8–44 are a coiled coil; the sequence is RSLMEQKAMELQQQLQALLDEIDQNKQESENISRESE.

This sequence belongs to the SLO1 family.

This chain is SCOCO-like protein 1, found in Schizosaccharomyces pombe (strain 972 / ATCC 24843) (Fission yeast).